The following is a 194-amino-acid chain: Dephospho-CoA kinase (194 aa).

In terms of domain architecture, DPCK spans 4–194 (ALGLTGSIGM…HLVSKLTEGT (191 aa)). Position 12–17 (12–17 (GMGKST)) interacts with ATP.

The protein belongs to the CoaE family.

The protein localises to the cytoplasm. It catalyses the reaction 3'-dephospho-CoA + ATP = ADP + CoA + H(+). It participates in cofactor biosynthesis; coenzyme A biosynthesis; CoA from (R)-pantothenate: step 5/5. Its function is as follows. Catalyzes the phosphorylation of the 3'-hydroxyl group of dephosphocoenzyme A to form coenzyme A. In Jannaschia sp. (strain CCS1), this protein is Dephospho-CoA kinase.